The sequence spans 547 residues: Chaperonin GroEL (547 aa).

Residues 30 to 33 (TLGP), lysine 51, 87 to 91 (DGTTT), glycine 415, 479 to 481 (NAA), and aspartate 495 each bind ATP.

This sequence belongs to the chaperonin (HSP60) family. In terms of assembly, forms a cylinder of 14 subunits composed of two heptameric rings stacked back-to-back. Interacts with the co-chaperonin GroES.

Its subcellular location is the cytoplasm. It carries out the reaction ATP + H2O + a folded polypeptide = ADP + phosphate + an unfolded polypeptide.. Together with its co-chaperonin GroES, plays an essential role in assisting protein folding. The GroEL-GroES system forms a nano-cage that allows encapsulation of the non-native substrate proteins and provides a physical environment optimized to promote and accelerate protein folding. This is Chaperonin GroEL from Bordetella pertussis (strain Tohama I / ATCC BAA-589 / NCTC 13251).